A 672-amino-acid polypeptide reads, in one-letter code: Inner kinetochore subunit mis6 (672 aa).

The protein belongs to the CENP-I/CTF3 family. As to quaternary structure, component of the inner kinetochore constitutive centromere-associated network (CCAN) (also known as central kinetochore Sim4 complex in fission yeast), which is composed of at least cnl2, cnp3, cnp20, fta1, fta2, fta3, fta4, fta6, fta7, mal2, mhf1, mhf2, mis6, mis15, mis17, sim4 and wip1. Interacts with cnp1, sim4, mis15 and mis17.

It localises to the nucleus. The protein resides in the chromosome. The protein localises to the centromere. Component of the kinetochore, a multiprotein complex that assembles on centromeric DNA and attaches chromosomes to spindle microtubules, mediating chromosome segregation and sister chromatid segregation during meiosis and mitosis. Component of the inner kinetochore constitutive centromere-associated network (CCAN), which serves as a structural platform for outer kinetochore assembly. Required for the localization of cnp1 to the centromere. The polypeptide is Inner kinetochore subunit mis6 (mis6) (Schizosaccharomyces pombe (strain 972 / ATCC 24843) (Fission yeast)).